The following is a 149-amino-acid chain: Calmodulin-2 (149 aa).

The residue at position 2 (Ala2) is an N-acetylalanine. EF-hand domains lie at 8-43, 44-79, 81-116, and 117-149; these read EQIAEFKEAFSLFDKDGNGNITTKELGTVMRSLGQN, PTEGELQDMINEVDADGNGTIDFPEFLTMMARKMKD, DSEEEIREAFKVFDKDGNGFISAAELRHVMTNPGEK, and LTDEEVDEMIREADIDGDGQVNYEEFVKMMTSK. Ca(2+) is bound by residues Asp21, Asp23, Asn25, Asn27, Glu32, Asp57, Asp59, Asn61, Thr63, Glu68, Asp94, Asp96, Asn98, and Glu105. An N6,N6,N6-trimethyllysine modification is found at Lys116. Residues Asp130, Asp132, Asp134, Gln136, and Glu141 each contribute to the Ca(2+) site.

It belongs to the calmodulin family.

Functionally, calmodulin mediates the control of a large number of enzymes, ion channels and other proteins by Ca(2+). Among the enzymes to be stimulated by the calmodulin-Ca(2+) complex are a number of protein kinases and phosphatases. This chain is Calmodulin-2 (CAM2), found in Branchiostoma floridae (Florida lancelet).